The following is a 331-amino-acid chain: N-arachidonyl glycine receptor (331 aa).

At 1–26 (MITLNNQDQPVPFNSSHPDEYKIAAL) the chain is on the extracellular side. Asn14 carries an N-linked (GlcNAc...) asparagine glycan. A helical transmembrane segment spans residues 27 to 47 (VFYSCIFIIGLFVNITALWVF). The Cytoplasmic portion of the chain corresponds to 48-56 (SCTTKKRTT). Residues 57–77 (VTIYMMNVALVDLIFIMTLPF) traverse the membrane as a helical segment. Over 78 to 95 (RMFYYAKDEWPFGEYFCQ) the chain is Extracellular. Cys94 and Cys172 are joined by a disulfide. The helical transmembrane segment at 96-116 (ILGALTVFYPSIALWLLAFIS) threads the bilayer. Over 117 to 138 (ADRYMAIVQPKYAKELKNTCKA) the chain is Cytoplasmic. Residues 139–159 (VLACVGVWIMTLTTTTPLLLL) form a helical membrane-spanning segment. Topologically, residues 160 to 191 (YKDPDKDSTPATCLKISDIIYLKAVNVLNLTR) are extracellular. A helical membrane pass occupies residues 192-212 (LTFFFLIPLFIMIGCYLVIIH). Residues 213–232 (NLLHGRTSKLKPKVKEKSIR) are Cytoplasmic-facing. The helical transmembrane segment at 233–253 (IIITLLVQVLVCFMPFHICFA) threads the bilayer. Topologically, residues 254–268 (FLMLGTGENSYNPWG) are extracellular. A helical transmembrane segment spans residues 269 to 289 (AFTTFLMNLSTCLDVILYYIV). Residues 290–331 (SKQFQARVISVMLYRNYLRSMRRKSFRSGSLRSLSNINSEML) lie on the Cytoplasmic side of the membrane. Ser322 bears the Phosphoserine mark.

The protein belongs to the G-protein coupled receptor 1 family. Expressed in midpiece of spermatozoon (at protein level). Most abundant in testis and spleen. Highly expressed in CD4 and CD8-positive T-cells as well as CD19-positive B-cells.

The protein resides in the cell membrane. Its subcellular location is the cytoplasmic vesicle membrane. G protein-coupled receptor (GPCR) that plays a role in diverse physiological processes particularly within the immune and nervous systems. Becomes active when triggered by various endogenous ligands including endocannabinoid N-arachidonyl glycine (NAGly), delta-9-tetrahydrocannabinol or resolvin D2/RvD2 derived from the omega-3 fatty acid docosahexaenoic acid (DHA). Upon RvD2 binding, facilitates the resolution of inflammation, aiding in tissue repair and homeostasis. Mechanistically, RvD2 ligation initiates Galphas protein coupling, activation of cAMP-PKA signaling pathway and phosphorylation of STAT3, leading to RvD2-stimulated macrophage phagocytosis. Mediates NAGly-induced process of reorganization of actin filaments and induction of acrosomal exocytosis. Activation by N-arachidonoyl glycine (NAGly) can also induce apoptosis in macrophages. Plays a role in homeostasis of CD8+ subsets of intraepithelial lymphocytes (IELs) (CD8alphaalpha and CD8alphabeta IELs) in small intestine by supporting preferential migration of CD8alphaalpha T-cells to intraepithelial compartment over lamina propria compartment, and by mediating their reconstitution into small intestine after bone marrow transplant. Also participates in hypotensive responses, mediating reduction in intraocular and blood pressure. The sequence is that of N-arachidonyl glycine receptor (GPR18) from Homo sapiens (Human).